The following is a 650-amino-acid chain: Outer capsid protein VP4 (650 aa).

Glycine 2 carries N-myristoyl glycine; by host lipidation. N-linked (GlcNAc...) asparagine; by host glycans are attached at residues asparagine 110, asparagine 407, and asparagine 493.

This sequence belongs to the aquareoviridae outer capsid VP4 protein family. In terms of assembly, interacts with VP6 and VP7. In terms of processing, cleaved during the endosomal proteolytic disassembly of the outer capsid. N-terminally myristoylated. This acylation is essential for the membrane fusion activity.

It localises to the virion. Its function is as follows. Interacts with VP7 to form the outer icosahedral capsid with an incomplete T=13 symmetry, about 80 nm in diameter, and consisting of 200 VP4-VP7 trimers. Myristoylated N-terminal peptide may be released in the endosome and involved in permeabilization and delivery of transcriptionally active viral particles into the host cell cytoplasm (Potential). This chain is Outer capsid protein VP4 (S6), found in Ctenopharyngodon idella (Grass carp).